The following is a 1399-amino-acid chain: DNA-directed RNA polymerase subunit beta' (1399 aa).

Residues cysteine 70, cysteine 72, cysteine 85, and cysteine 88 each contribute to the Zn(2+) site. Positions 460, 462, and 464 each coordinate Mg(2+). Residues cysteine 814, cysteine 888, cysteine 895, and cysteine 898 each contribute to the Zn(2+) site.

This sequence belongs to the RNA polymerase beta' chain family. As to quaternary structure, the RNAP catalytic core consists of 2 alpha, 1 beta, 1 beta' and 1 omega subunit. When a sigma factor is associated with the core the holoenzyme is formed, which can initiate transcription. It depends on Mg(2+) as a cofactor. Zn(2+) is required as a cofactor.

The catalysed reaction is RNA(n) + a ribonucleoside 5'-triphosphate = RNA(n+1) + diphosphate. Its function is as follows. DNA-dependent RNA polymerase catalyzes the transcription of DNA into RNA using the four ribonucleoside triphosphates as substrates. This Pseudomonas entomophila (strain L48) protein is DNA-directed RNA polymerase subunit beta'.